We begin with the raw amino-acid sequence, 624 residues long: Penicillin-binding protein 4 (624 aa).

Positions 1-21 are cleaved as a signal peptide; it reads MTMLRKIIGWILLLCIIPLFA. Catalysis depends on glutamate 96, which acts as the Proton donor; for transglycosylase activity. Serine 388 serves as the catalytic Acyl-ester intermediate; for transpeptidase activity.

In the N-terminal section; belongs to the glycosyltransferase 51 family. The protein in the C-terminal section; belongs to the transpeptidase family. The N-terminus is blocked.

The protein resides in the cell membrane. The catalysed reaction is [GlcNAc-(1-&gt;4)-Mur2Ac(oyl-L-Ala-gamma-D-Glu-L-Lys-D-Ala-D-Ala)](n)-di-trans,octa-cis-undecaprenyl diphosphate + beta-D-GlcNAc-(1-&gt;4)-Mur2Ac(oyl-L-Ala-gamma-D-Glu-L-Lys-D-Ala-D-Ala)-di-trans,octa-cis-undecaprenyl diphosphate = [GlcNAc-(1-&gt;4)-Mur2Ac(oyl-L-Ala-gamma-D-Glu-L-Lys-D-Ala-D-Ala)](n+1)-di-trans,octa-cis-undecaprenyl diphosphate + di-trans,octa-cis-undecaprenyl diphosphate + H(+). The enzyme catalyses Preferential cleavage: (Ac)2-L-Lys-D-Ala-|-D-Ala. Also transpeptidation of peptidyl-alanyl moieties that are N-acyl substituents of D-alanine.. In terms of biological role, cell wall formation. Synthesis of cross-linked peptidoglycan from the lipid intermediates. The enzyme has a penicillin-insensitive transglycosylase N-terminal domain (formation of linear glycan strands) and a penicillin-sensitive transpeptidase C-terminal domain (cross-linking of the peptide subunits). Has a partially redundant function with PBP-2A (pbpA) during spore outgrowth. In Bacillus subtilis (strain 168), this protein is Penicillin-binding protein 4.